We begin with the raw amino-acid sequence, 333 residues long: Tetraacyldisaccharide 4'-kinase (333 aa).

Residue 55–62 coordinates ATP; the sequence is TIGGNGKT.

It belongs to the LpxK family.

The enzyme catalyses a lipid A disaccharide + ATP = a lipid IVA + ADP + H(+). It participates in glycolipid biosynthesis; lipid IV(A) biosynthesis; lipid IV(A) from (3R)-3-hydroxytetradecanoyl-[acyl-carrier-protein] and UDP-N-acetyl-alpha-D-glucosamine: step 6/6. Functionally, transfers the gamma-phosphate of ATP to the 4'-position of a tetraacyldisaccharide 1-phosphate intermediate (termed DS-1-P) to form tetraacyldisaccharide 1,4'-bis-phosphate (lipid IVA). The polypeptide is Tetraacyldisaccharide 4'-kinase (Blochmanniella floridana).